We begin with the raw amino-acid sequence, 68 residues long: Pantinin-3 (68 aa).

Positions 1–23 are cleaved as a signal peptide; the sequence is MKTQFAILLIALVLFQLLSQSDA. Leu36 carries the leucine amide modification. Positions 40-68 are excised as a propeptide; sequence GLNELDNLDELFDGEISQADIDFLKELMS.

It belongs to the non-disulfide-bridged peptide (NDBP) superfamily. Short antimicrobial peptide (group 4) family. As to expression, expressed by the venom gland.

The protein resides in the secreted. It localises to the target cell membrane. Its function is as follows. Amphipathic peptide that possesses relatively strong activities against Gram-positive bacteria and a fungus, but has very weak antimicrobial activities against Gram-negative bacteria. Also exhibits mild hemolytic activities against human erythrocytes (16 uM induce 70% of hemolysis). Furthermore, this peptide potently inhibits the growth of vancomycin-resistant Enterococcus (VRE) S13, a pathogen that can cause a number of human infections. Minimal inhibitory concentration (MIC) are the following: 16 uM against S.aureus, 6 uM against B.magaterium, 8 uM against M.luteus, 4 uM against VRE, 12 uM against methicillin-resistant S.aureus, 36 uM against E.coli, &gt;87 uM against P.putida, 87 uM against K.oxytoca, &gt;87 uM against E.cloacae, 84 uM against S.enterica and 17 uM against the fungus C.tropicalis. The protein is Pantinin-3 of Pandinus imperator (Emperor scorpion).